We begin with the raw amino-acid sequence, 298 residues long: Glycine--tRNA ligase alpha subunit (298 aa).

This sequence belongs to the class-II aminoacyl-tRNA synthetase family. In terms of assembly, tetramer of two alpha and two beta subunits.

The protein resides in the cytoplasm. The enzyme catalyses tRNA(Gly) + glycine + ATP = glycyl-tRNA(Gly) + AMP + diphosphate. This Helicobacter hepaticus (strain ATCC 51449 / 3B1) protein is Glycine--tRNA ligase alpha subunit.